The following is a 327-amino-acid chain: o-succinylbenzoate synthase (327 aa).

The active-site Proton donor is the Lys110. Residues Asp138, Glu165, and Asp188 each coordinate Mg(2+). The Proton acceptor role is filled by Lys212.

The protein belongs to the mandelate racemase/muconate lactonizing enzyme family. MenC type 1 subfamily. It depends on a divalent metal cation as a cofactor.

It catalyses the reaction (1R,6R)-6-hydroxy-2-succinyl-cyclohexa-2,4-diene-1-carboxylate = 2-succinylbenzoate + H2O. The protein operates within quinol/quinone metabolism; 1,4-dihydroxy-2-naphthoate biosynthesis; 1,4-dihydroxy-2-naphthoate from chorismate: step 4/7. It participates in quinol/quinone metabolism; menaquinone biosynthesis. Functionally, converts 2-succinyl-6-hydroxy-2,4-cyclohexadiene-1-carboxylate (SHCHC) to 2-succinylbenzoate (OSB). This chain is o-succinylbenzoate synthase, found in Mycobacterium marinum (strain ATCC BAA-535 / M).